The following is a 361-amino-acid chain: DNA replication and repair protein RecF (361 aa).

Residue 30 to 37 coordinates ATP; that stretch reads GPNGSGKT.

The protein belongs to the RecF family.

The protein localises to the cytoplasm. Its function is as follows. The RecF protein is involved in DNA metabolism; it is required for DNA replication and normal SOS inducibility. RecF binds preferentially to single-stranded, linear DNA. It also seems to bind ATP. This is DNA replication and repair protein RecF from Erwinia tasmaniensis (strain DSM 17950 / CFBP 7177 / CIP 109463 / NCPPB 4357 / Et1/99).